The primary structure comprises 172 residues: 3-hydroxydecanoyl-[acyl-carrier-protein] dehydratase (172 aa).

H71 is a catalytic residue.

This sequence belongs to the thioester dehydratase family. FabA subfamily. As to quaternary structure, homodimer.

The protein localises to the cytoplasm. It catalyses the reaction a (3R)-hydroxyacyl-[ACP] = a (2E)-enoyl-[ACP] + H2O. The enzyme catalyses (3R)-hydroxydecanoyl-[ACP] = (2E)-decenoyl-[ACP] + H2O. The catalysed reaction is (2E)-decenoyl-[ACP] = (3Z)-decenoyl-[ACP]. Its pathway is lipid metabolism; fatty acid biosynthesis. Its function is as follows. Necessary for the introduction of cis unsaturation into fatty acids. Catalyzes the dehydration of (3R)-3-hydroxydecanoyl-ACP to E-(2)-decenoyl-ACP and then its isomerization to Z-(3)-decenoyl-ACP. Can catalyze the dehydratase reaction for beta-hydroxyacyl-ACPs with saturated chain lengths up to 16:0, being most active on intermediate chain length. The chain is 3-hydroxydecanoyl-[acyl-carrier-protein] dehydratase from Escherichia coli (strain 55989 / EAEC).